Reading from the N-terminus, the 501-residue chain is Glutamyl-tRNA(Gln) amidotransferase subunit A (501 aa).

Active-site charge relay system residues include Lys-80 and Ser-155. Ser-179 serves as the catalytic Acyl-ester intermediate.

Belongs to the amidase family. GatA subfamily. Heterotrimer of A, B and C subunits.

It catalyses the reaction L-glutamyl-tRNA(Gln) + L-glutamine + ATP + H2O = L-glutaminyl-tRNA(Gln) + L-glutamate + ADP + phosphate + H(+). Allows the formation of correctly charged Gln-tRNA(Gln) through the transamidation of misacylated Glu-tRNA(Gln) in organisms which lack glutaminyl-tRNA synthetase. The reaction takes place in the presence of glutamine and ATP through an activated gamma-phospho-Glu-tRNA(Gln). This Cupriavidus pinatubonensis (strain JMP 134 / LMG 1197) (Cupriavidus necator (strain JMP 134)) protein is Glutamyl-tRNA(Gln) amidotransferase subunit A.